A 549-amino-acid polypeptide reads, in one-letter code: Probable amidase (549 aa).

Residues Lys-132 and Ser-209 each act as charge relay system in the active site. The Acyl-ester intermediate role is filled by Ser-233.

This sequence belongs to the amidase family.

It catalyses the reaction a monocarboxylic acid amide + H2O = a monocarboxylate + NH4(+). This Saccharomyces cerevisiae (strain ATCC 204508 / S288c) (Baker's yeast) protein is Probable amidase (AMD2).